A 366-amino-acid polypeptide reads, in one-letter code: Protein FAM110B (366 aa).

3 disordered regions span residues 127 to 152 (SSEG…DTTD), 163 to 182 (KVYP…HVSR), and 216 to 252 (CSSS…RPSL). A phosphoserine mark is found at Ser-234 and Ser-297. The interval 313-333 (DCEQSQDSNSDLRNDDSANDR) is disordered. Basic and acidic residues predominate over residues 322–331 (SDLRNDDSAN).

The protein belongs to the FAM110 family.

It localises to the cytoplasm. The protein localises to the cytoskeleton. The protein resides in the microtubule organizing center. It is found in the centrosome. The polypeptide is Protein FAM110B (Fam110b) (Mus musculus (Mouse)).